Consider the following 228-residue polypeptide: Ribose-5-phosphate isomerase A (228 aa).

Substrate is bound by residues 29–32 (TGST), 84–87 (DGAD), and 97–100 (KGGG). Residue Glu106 is the Proton acceptor of the active site. Lys124 contacts substrate.

It belongs to the ribose 5-phosphate isomerase family. Homodimer.

The catalysed reaction is aldehydo-D-ribose 5-phosphate = D-ribulose 5-phosphate. Its pathway is carbohydrate degradation; pentose phosphate pathway; D-ribose 5-phosphate from D-ribulose 5-phosphate (non-oxidative stage): step 1/1. Its function is as follows. Catalyzes the reversible conversion of ribose-5-phosphate to ribulose 5-phosphate. The chain is Ribose-5-phosphate isomerase A from Sphingopyxis alaskensis (strain DSM 13593 / LMG 18877 / RB2256) (Sphingomonas alaskensis).